Reading from the N-terminus, the 761-residue chain is 5-methyltetrahydropteroyltriglutamate--homocysteine methyltransferase (761 aa).

5-methyltetrahydropteroyltri-L-glutamate is bound by residues 16–19 (RELK) and lysine 116. L-homocysteine-binding positions include 437 to 439 (IGS) and glutamate 490. Residues 437–439 (IGS) and glutamate 490 each bind L-methionine. Residues 521–522 (RC) and tryptophan 567 each bind 5-methyltetrahydropteroyltri-L-glutamate. Aspartate 605 is a binding site for L-homocysteine. Residue aspartate 605 coordinates L-methionine. Glutamate 611 lines the 5-methyltetrahydropteroyltri-L-glutamate pocket. Residues histidine 647, cysteine 649, and glutamate 671 each coordinate Zn(2+). Histidine 700 (proton donor) is an active-site residue. Residue cysteine 732 coordinates Zn(2+).

This sequence belongs to the vitamin-B12 independent methionine synthase family. It depends on Zn(2+) as a cofactor.

The enzyme catalyses 5-methyltetrahydropteroyltri-L-glutamate + L-homocysteine = tetrahydropteroyltri-L-glutamate + L-methionine. It functions in the pathway amino-acid biosynthesis; L-methionine biosynthesis via de novo pathway; L-methionine from L-homocysteine (MetE route): step 1/1. Functionally, catalyzes the transfer of a methyl group from 5-methyltetrahydrofolate to homocysteine resulting in methionine formation. The chain is 5-methyltetrahydropteroyltriglutamate--homocysteine methyltransferase from Chromohalobacter salexigens (strain ATCC BAA-138 / DSM 3043 / CIP 106854 / NCIMB 13768 / 1H11).